The sequence spans 637 residues: Early transcription factor 70 kDa subunit (637 aa).

The Helicase ATP-binding domain occupies Arg32 to Glu185. His45 to Thr52 is a binding site for ATP. The DEXH box motif lies at Asp135–His138. Residues Lys327–Leu507 form the Helicase C-terminal domain.

It belongs to the helicase family. VETF subfamily. As to quaternary structure, heterodimer of a 70 kDa and a 82 kDa subunit. Part of the early transcription complex composed of ETF, RAP94/OPG109, and the DNA-directed RNA polymerase.

The protein resides in the virion. In terms of biological role, acts with RNA polymerase to initiate transcription from early gene promoters. Is recruited by the RPO-associated protein of 94 kDa RAP94/OPG109 to form the early transcription complex, which also contains the core RNA polymerase. ETF heterodimer binds to early gene promoters. In Homo sapiens (Human), this protein is Early transcription factor 70 kDa subunit (OPG118).